A 918-amino-acid chain; its full sequence is MSDVKPPQHFTMNGNPPPPEFKNPKKPGRLTNHLQYIEKVVIRALWKHHFSWPFRQPVDAVRLNLPDYYTIIKNPMDLTTIRKRLENNYYWKAMECVEDFNTMFTNCYVYNRPGDDIVLMAQVLEKLFLEKVAEMPEEEYEISALTTKGPVKGARKSTIGLKKRPPSPMSEVVFQQTVTVIPPDALHTIPSAPLSAQLTAKLKNGVKRKADTTTPSASSIPSCESSSCVTEPKVLKLFSRRGSGRPIKPPCKDLPESPPQHQVGRRTKLSERLKYCNAILKEMFSKKHSAYAWPFYKPVDAETLGLLDYHEIIHQPMDMSTIKKKMEAREYTDALQFAADMRLMFSNCYKYNPPGHEVVSMARKLQDVFEFRFSKIPDEPKNANPVSSHNRVKKERARSPSSSESSDSESSSPENSSDTEEEDEEERAHRLASLEEQQLKAVREQLQLLTQTPLSKILKRSSSSKSSGCKVCTMMNSLKKPKFNSVLRRKESRACDSEEEMNTLPMSYEEKRQLSLDINKLPGDKLGKVVNIIKAREPLLRDTDPEEIEIDFETLKPSTLRALECYVVGCLRKKKNKPPKKSKIKEKDKDLQHATGEQNSHKKTKIETDGEIKDTTHPSRLSDSSSSSSSSDSSSSDSSSSDSCDSDSGLTEQKTKRKQSKGPGHANKIKKKKYYPVVPLPEQALRQANAEVKDSSSASGVMCQSRPSSLVSETGSKDLFASQHAKHPVEDITAITGIPPLLSPLTSPSAAMPATGSQSTSSSQFEASSPLCLYKDIVLKHADSWTSLGKLATQTPCTIKSSKESFQQFRKVAMEKELTTASRGLVSKHCLTQQPQKAKLECQPSKPEVESAELPLMAAILDTPKAPEPSSVLQNSVDREREMARKREQERRRREAMSGVIDMTMQRDIMATFEKNLE.

The interval Met-1–Lys-26 is disordered. The 107-residue stretch at Arg-29 to Met-135 folds into the Bromo 1 domain. The Nuclear localization signal motif lies at Asn-204–Pro-215. 5 disordered regions span residues Arg-241–Thr-267, Glu-379–Arg-430, Lys-575–Ser-712, Ile-738–Gln-764, and Asp-862–Gly-899. A Bromo 2 domain is found at Thr-267 to Ile-376. Low complexity predominate over residues Ser-399–Ser-416. Positions Glu-426–Thr-452 form a coiled coil. One can recognise an NET domain in the interval Asp-496–Pro-578. Residues Lys-575 to Ile-584 show a composition bias toward basic residues. Over residues Lys-605–His-617 the composition is skewed to basic and acidic residues. Composition is skewed to low complexity over residues Ser-622–Ser-648 and Pro-739–Gln-764. A coiled-coil region spans residues Glu-815 to Asp-902. Residues Val-877–Ala-896 are compositionally biased toward basic and acidic residues.

The protein belongs to the BET family.

Its subcellular location is the nucleus. Its function is as follows. Testis-specific chromatin protein that specifically binds histone H4 acetylated at 'Lys-5' and 'Lys-8' (H4K5ac and H4K8ac, respectively) and plays a key role in spermatogenesis. Required in late pachytene spermatocytes: plays a role in meiotic and post-meiotic cells by binding to acetylated histones at the promoter of specific meiotic and post-meiotic genes, facilitating their activation at the appropriate time. In the post-meiotic phase of spermatogenesis, binds to hyperacetylated histones and participates in their general removal from DNA. Also recognizes and binds a subset of butyrylated histones: able to bind histone H4 butyrylated at 'Lys-8' (H4K8ac), while it is not able to bind H4 butyrylated at 'Lys-5' (H4K5ac). The protein is Bromodomain testis-specific protein (brdt) of Danio rerio (Zebrafish).